Reading from the N-terminus, the 349-residue chain is Protein RecA (349 aa).

65–72 (GPESSGKT) contacts ATP.

This sequence belongs to the RecA family.

It is found in the cytoplasm. Can catalyze the hydrolysis of ATP in the presence of single-stranded DNA, the ATP-dependent uptake of single-stranded DNA by duplex DNA, and the ATP-dependent hybridization of homologous single-stranded DNAs. It interacts with LexA causing its activation and leading to its autocatalytic cleavage. The chain is Protein RecA from Azotobacter vinelandii (strain DJ / ATCC BAA-1303).